Consider the following 183-residue polypeptide: uncharacterized protein (183 aa).

The first 29 residues, 1–29 (MQCWQQPFLRFLQQPFFLATASLAGSSSS), serve as a signal peptide directing secretion. The disordered stretch occupies residues 149-183 (PGSTCDGSLKGRAYPSCVPKRDPEHSREESHPLSG). A compositionally biased stretch (basic and acidic residues) spans 167-183 (PKRDPEHSREESHPLSG).

Its subcellular location is the secreted. This is an uncharacterized protein from Homo sapiens (Human).